Consider the following 165-residue polypeptide: UPF0303 protein ACP_1015 (165 aa).

It belongs to the UPF0303 family.

In Acidobacterium capsulatum (strain ATCC 51196 / DSM 11244 / BCRC 80197 / JCM 7670 / NBRC 15755 / NCIMB 13165 / 161), this protein is UPF0303 protein ACP_1015.